The following is a 206-amino-acid chain: Small ribosomal subunit protein uS4 (206 aa).

Positions 96-156 constitute an S4 RNA-binding domain; it reads TRLDNVVYRM…EKSRTQARIK (61 aa).

The protein belongs to the universal ribosomal protein uS4 family. Part of the 30S ribosomal subunit. Contacts protein S5. The interaction surface between S4 and S5 is involved in control of translational fidelity.

Functionally, one of the primary rRNA binding proteins, it binds directly to 16S rRNA where it nucleates assembly of the body of the 30S subunit. With S5 and S12 plays an important role in translational accuracy. This chain is Small ribosomal subunit protein uS4, found in Shewanella sp. (strain MR-4).